Reading from the N-terminus, the 316-residue chain is Ribosomal RNA small subunit methyltransferase H (316 aa).

S-adenosyl-L-methionine-binding positions include 35 to 37 (AGH), Asp55, Phe84, Asp105, and Gln112.

This sequence belongs to the methyltransferase superfamily. RsmH family.

The protein resides in the cytoplasm. The catalysed reaction is cytidine(1402) in 16S rRNA + S-adenosyl-L-methionine = N(4)-methylcytidine(1402) in 16S rRNA + S-adenosyl-L-homocysteine + H(+). Specifically methylates the N4 position of cytidine in position 1402 (C1402) of 16S rRNA. This is Ribosomal RNA small subunit methyltransferase H from Streptococcus thermophilus (strain ATCC BAA-250 / LMG 18311).